The chain runs to 199 residues: NAD(P)H dehydrogenase (quinone) (199 aa).

The region spanning 4–190 is the Flavodoxin-like domain; that stretch reads ILVLYYSMYG…AIARFQGEHV (187 aa). FMN-binding positions include 10–15 and 79–81; these read SMYGHI and TRF. Tyrosine 12 contributes to the NAD(+) binding site. Residue tryptophan 99 coordinates substrate. FMN contacts are provided by residues 114–119 and histidine 134; that span reads STGTGG.

This sequence belongs to the WrbA family. Requires FMN as cofactor.

The enzyme catalyses a quinone + NADH + H(+) = a quinol + NAD(+). It carries out the reaction a quinone + NADPH + H(+) = a quinol + NADP(+). This is NAD(P)H dehydrogenase (quinone) from Yersinia enterocolitica serotype O:8 / biotype 1B (strain NCTC 13174 / 8081).